The primary structure comprises 468 residues: Hydroxymethylglutaryl-CoA synthase B (468 aa).

E85 functions as the Proton donor/acceptor in the catalytic mechanism. C119 serves as the catalytic Acyl-thioester intermediate. C119, T161, S211, H250, K259, N327, and S359 together coordinate (3S)-3-hydroxy-3-methylglutaryl-CoA. H250 acts as the Proton donor/acceptor in catalysis.

It belongs to the thiolase-like superfamily. HMG-CoA synthase family.

It carries out the reaction acetoacetyl-CoA + acetyl-CoA + H2O = (3S)-3-hydroxy-3-methylglutaryl-CoA + CoA + H(+). The protein operates within metabolic intermediate biosynthesis; (R)-mevalonate biosynthesis; (R)-mevalonate from acetyl-CoA: step 2/3. Its function is as follows. Condenses acetyl-CoA with acetoacetyl-CoA to form HMG-CoA, which is the substrate for HMG-CoA reductase. This Dictyostelium discoideum (Social amoeba) protein is Hydroxymethylglutaryl-CoA synthase B (hgsB).